We begin with the raw amino-acid sequence, 705 residues long: Polyribonucleotide nucleotidyltransferase (705 aa).

Mg(2+) is bound by residues aspartate 492 and aspartate 498. The 60-residue stretch at 559 to 618 folds into the KH domain; that stretch reads PLMITMKVSPDKIRHIIGPGGKIINKIIDETGVEIDIDDDGSVYILAQDQESGNRAKEII. The 69-residue stretch at 628–696 folds into the S1 motif domain; it reads GDIYEGRVKK…ELGRINLSRK (69 aa).

This sequence belongs to the polyribonucleotide nucleotidyltransferase family. Requires Mg(2+) as cofactor.

Its subcellular location is the cytoplasm. The catalysed reaction is RNA(n+1) + phosphate = RNA(n) + a ribonucleoside 5'-diphosphate. Functionally, involved in mRNA degradation. Catalyzes the phosphorolysis of single-stranded polyribonucleotides processively in the 3'- to 5'-direction. The sequence is that of Polyribonucleotide nucleotidyltransferase from Halothermothrix orenii (strain H 168 / OCM 544 / DSM 9562).